We begin with the raw amino-acid sequence, 126 residues long: Fluoride-specific ion channel FluC (126 aa).

4 helical membrane-spanning segments follow: residues 4 to 24 (PLLS…FLGL), 33 to 53 (IPLG…FAMA), 67 to 87 (FVIT…IEIV), and 97 to 117 (MAML…CLGL). Na(+) contacts are provided by G74 and T77.

Belongs to the fluoride channel Fluc/FEX (TC 1.A.43) family.

Its subcellular location is the cell inner membrane. It catalyses the reaction fluoride(in) = fluoride(out). Na(+) is not transported, but it plays an essential structural role and its presence is essential for fluoride channel function. In terms of biological role, fluoride-specific ion channel. Important for reducing fluoride concentration in the cell, thus reducing its toxicity. The sequence is that of Fluoride-specific ion channel FluC from Acinetobacter baumannii (strain SDF).